Consider the following 277-residue polypeptide: Ribosomal RNA small subunit methyltransferase A (277 aa).

Residues N20, L22, G47, E68, D93, and N114 each coordinate S-adenosyl-L-methionine.

It belongs to the class I-like SAM-binding methyltransferase superfamily. rRNA adenine N(6)-methyltransferase family. RsmA subfamily.

Its subcellular location is the cytoplasm. The catalysed reaction is adenosine(1518)/adenosine(1519) in 16S rRNA + 4 S-adenosyl-L-methionine = N(6)-dimethyladenosine(1518)/N(6)-dimethyladenosine(1519) in 16S rRNA + 4 S-adenosyl-L-homocysteine + 4 H(+). Functionally, specifically dimethylates two adjacent adenosines (A1518 and A1519) in the loop of a conserved hairpin near the 3'-end of 16S rRNA in the 30S particle. May play a critical role in biogenesis of 30S subunits. This is Ribosomal RNA small subunit methyltransferase A from Aliivibrio salmonicida (strain LFI1238) (Vibrio salmonicida (strain LFI1238)).